Consider the following 340-residue polypeptide: Glyceraldehyde-3-phosphate dehydrogenase (340 aa).

NAD(+) is bound by residues 11-12 (SI) and Gly111. D-glyceraldehyde 3-phosphate is bound at residue 140-142 (SCN). Cys141 functions as the Nucleophile in the catalytic mechanism. Arg169 is a binding site for NAD(+). 195-196 (HG) lines the D-glyceraldehyde 3-phosphate pocket. Position 303 (Gln303) interacts with NAD(+).

Belongs to the glyceraldehyde-3-phosphate dehydrogenase family. Homotetramer.

Its subcellular location is the cytoplasm. It catalyses the reaction D-glyceraldehyde 3-phosphate + phosphate + NADP(+) = (2R)-3-phospho-glyceroyl phosphate + NADPH + H(+). The enzyme catalyses D-glyceraldehyde 3-phosphate + phosphate + NAD(+) = (2R)-3-phospho-glyceroyl phosphate + NADH + H(+). It functions in the pathway carbohydrate degradation; glycolysis; pyruvate from D-glyceraldehyde 3-phosphate: step 1/5. In Methanococcus maripaludis (strain DSM 14266 / JCM 13030 / NBRC 101832 / S2 / LL), this protein is Glyceraldehyde-3-phosphate dehydrogenase.